The chain runs to 483 residues: Altronate oxidoreductase (483 aa).

NAD(+) is bound at residue 18–29; that stretch reads IIQFGEGNFLRA.

The protein belongs to the mannitol dehydrogenase family. UxaB subfamily.

It carries out the reaction D-altronate + NAD(+) = keto-D-tagaturonate + NADH + H(+). Its pathway is carbohydrate metabolism; pentose and glucuronate interconversion. The chain is Altronate oxidoreductase from Klebsiella pneumoniae subsp. pneumoniae (strain ATCC 700721 / MGH 78578).